The following is a 566-amino-acid chain: Transcription factor opdL (566 aa).

The zn(2)-C6 fungal-type DNA-binding region spans 15–45 (CATCARAKCRCVPRNGGRGRCERCHHLNKEC).

The protein resides in the nucleus. Its function is as follows. Transcription factor; part of the gene cluster that mediates the biosynthesis of oxopyrrolidines, polyketide-amino acid hybrid compounds with feature structures of tetramic acid. The protein is Transcription factor opdL of Penicillium oxalicum (strain 114-2 / CGMCC 5302) (Penicillium decumbens).